Consider the following 250-residue polypeptide: Global transcriptional regulator CodY (250 aa).

The GAF domain stretch occupies residues 1-147; that stretch reads MSTLLEKTRK…GATVVGLEIL (147 aa). The H-T-H motif DNA-binding region spans 195-214; sequence ASKIADKVGITRSVIVNALR.

This sequence belongs to the CodY family.

It is found in the cytoplasm. DNA-binding global transcriptional regulator which is involved in the adaptive response to starvation and acts by directly or indirectly controlling the expression of numerous genes in response to nutrient availability. During rapid exponential growth, CodY is highly active and represses genes whose products allow adaptation to nutrient depletion. This is Global transcriptional regulator CodY from Thermoanaerobacter sp. (strain X514).